A 347-amino-acid chain; its full sequence is Protein RecA (347 aa).

64–71 (GPESSGKT) is a binding site for ATP.

Belongs to the RecA family.

It localises to the cytoplasm. Its function is as follows. Can catalyze the hydrolysis of ATP in the presence of single-stranded DNA, the ATP-dependent uptake of single-stranded DNA by duplex DNA, and the ATP-dependent hybridization of homologous single-stranded DNAs. It interacts with LexA causing its activation and leading to its autocatalytic cleavage. This Bartonella quintana (strain Toulouse) (Rochalimaea quintana) protein is Protein RecA.